A 355-amino-acid polypeptide reads, in one-letter code: MSYQEAWNPVDSSLDEIISIAASLKSKTGAVKEIFSQELTQREANVKKVHENLEELQKKLDHTSFAHKEDRDRLEAQIAQKEQEQKAKLAEYDQKVQNEFDARERAEREREAARGDAAAEKQRLASLLKDLEDDASGYNRLRPSKPMLSEEDTNILRQLFLSSAVSGSGKFSFQDLKQVLAKYADTIPEGPLKKLFVMVENDTKGRMSYITLVAVANDLAALVADFRKIDTNSNGTLSRKEFREHFVRLGFDKKSVQDALFRYADEDESDDVGFSEYVHLGLCLLVLRILYAFADFDKSGQLSKEEVQKVLEDAHIPESARKKFEHQFSVVDVDDSKSLSYQEFVMLVLLMFHDD.

EF-hand domains follow at residues 151–186 (EDTN…YADT) and 217–252 (NDLA…LGFD). Residues Asp-230, Asn-232, Asn-234, Thr-236, Glu-241, Asp-265, Asp-267, Ser-269, Asp-271, Glu-276, Asp-295, Asp-297, Ser-299, Gln-301, Glu-306, Asp-332, Asp-334, Ser-336, Ser-338, and Glu-343 each coordinate Ca(2+). EF-hand domains are found at residues 282–317 (LCLL…AHIP) and 319–354 (SARK…MFHD).

In Physarum polycephalum (Slime mold), this protein is Plasmodial-specific protein LAV1-2.